The sequence spans 238 residues: Ribonuclease PH (238 aa).

Phosphate contacts are provided by residues Arg-86 and 124–126 (GTR).

Belongs to the RNase PH family. Homohexameric ring arranged as a trimer of dimers.

The enzyme catalyses tRNA(n+1) + phosphate = tRNA(n) + a ribonucleoside 5'-diphosphate. Functionally, phosphorolytic 3'-5' exoribonuclease that plays an important role in tRNA 3'-end maturation. Removes nucleotide residues following the 3'-CCA terminus of tRNAs; can also add nucleotides to the ends of RNA molecules by using nucleoside diphosphates as substrates, but this may not be physiologically important. Probably plays a role in initiation of 16S rRNA degradation (leading to ribosome degradation) during starvation. The polypeptide is Ribonuclease PH (Acinetobacter baylyi (strain ATCC 33305 / BD413 / ADP1)).